We begin with the raw amino-acid sequence, 328 residues long: tRNA uridine(34) hydroxylase (328 aa).

Positions 130–224 (LDEDTVVLDT…YGKDPEVQGE (95 aa)) constitute a Rhodanese domain. C184 acts as the Cysteine persulfide intermediate in catalysis.

The protein belongs to the TrhO family.

It carries out the reaction uridine(34) in tRNA + AH2 + O2 = 5-hydroxyuridine(34) in tRNA + A + H2O. Functionally, catalyzes oxygen-dependent 5-hydroxyuridine (ho5U) modification at position 34 in tRNAs. This is tRNA uridine(34) hydroxylase from Streptococcus pyogenes serotype M3 (strain SSI-1).